A 199-amino-acid polypeptide reads, in one-letter code: Protein-methionine-sulfoxide reductase heme-binding subunit MsrQ (199 aa).

The next 4 membrane-spanning stretches (helical) occupy residues 10–30 (WLKV…FWAI), 82–102 (LWCF…ELGI), 116–136 (PYLT…LTST), and 153–173 (VVYL…KILS).

It belongs to the MsrQ family. As to quaternary structure, heterodimer of a catalytic subunit (MsrP) and a heme-binding subunit (MsrQ). FMN serves as cofactor. Heme b is required as a cofactor.

The protein localises to the cell inner membrane. Part of the MsrPQ system that repairs oxidized periplasmic proteins containing methionine sulfoxide residues (Met-O), using respiratory chain electrons. Thus protects these proteins from oxidative-stress damage caused by reactive species of oxygen and chlorine generated by the host defense mechanisms. MsrPQ is essential for the maintenance of envelope integrity under bleach stress, rescuing a wide series of structurally unrelated periplasmic proteins from methionine oxidation, including the primary periplasmic chaperone SurA and the lipoprotein Pal. MsrQ provides electrons for reduction to the reductase catalytic subunit MsrP, using the quinone pool of the respiratory chain. The protein is Protein-methionine-sulfoxide reductase heme-binding subunit MsrQ of Salmonella dublin (strain CT_02021853).